Reading from the N-terminus, the 179-residue chain is Protein GrpE (179 aa).

It belongs to the GrpE family. As to quaternary structure, homodimer.

The protein localises to the cytoplasm. Functionally, participates actively in the response to hyperosmotic and heat shock by preventing the aggregation of stress-denatured proteins, in association with DnaK and GrpE. It is the nucleotide exchange factor for DnaK and may function as a thermosensor. Unfolded proteins bind initially to DnaJ; upon interaction with the DnaJ-bound protein, DnaK hydrolyzes its bound ATP, resulting in the formation of a stable complex. GrpE releases ADP from DnaK; ATP binding to DnaK triggers the release of the substrate protein, thus completing the reaction cycle. Several rounds of ATP-dependent interactions between DnaJ, DnaK and GrpE are required for fully efficient folding. This Rickettsia felis (strain ATCC VR-1525 / URRWXCal2) (Rickettsia azadi) protein is Protein GrpE.